Consider the following 323-residue polypeptide: uncharacterized protein (323 aa).

This is an uncharacterized protein from Bacillus subtilis (strain 168).